A 443-amino-acid polypeptide reads, in one-letter code: Delta(6)-fatty-acid desaturase fat-3 (443 aa).

Residues Met-1–Asp-71 enclose the Cytochrome b5 heme-binding domain. Helical transmembrane passes span Ile-136–Leu-156, Thr-296–Leu-316, and Val-318–Phe-338.

Belongs to the fatty acid desaturase type 1 family.

It localises to the membrane. The catalysed reaction is (9Z,12Z)-octadecadienoyl-CoA + 2 Fe(II)-[cytochrome b5] + O2 + 2 H(+) = (6Z,9Z,12Z)-octadecatrienoyl-CoA + 2 Fe(III)-[cytochrome b5] + 2 H2O. It carries out the reaction (9Z,12Z,15Z)-octadecatrienoyl-CoA + 2 Fe(II)-[cytochrome b5] + O2 + 2 H(+) = (6Z,9Z,12Z,15Z)-octadecatetraenoyl-CoA + 2 Fe(III)-[cytochrome b5] + 2 H2O. The protein operates within lipid metabolism; polyunsaturated fatty acid biosynthesis. In terms of biological role, can function as a Delta(6) fatty acid desaturase. Introduces a double bond in the fatty acid chain 6 carbons away from carboxy terminal to biosynthesize polyunsaturated fatty acids (PUFAs) endogenously (PUFAs are essential for membrane structure and many cellular and physiological processes). Acts on a variety of substrates such as linoleoyl-CoA ((9Z,12Z)-octadecadienoyl-CoA, C18:2n-6) and alpha-linolenoyl-CoA ((9Z,12Z,15Z)-octadecatrienoyl-CoA, C18:3n-3) to produce gamma-linolenoyl-CoA ((6Z,9Z,12Z)-octadecatrienoyl-CoA, C18:3n-6) and (6Z,9Z,12Z,15Z)-octadecatetraenoyl-CoA (18:4n-3) respectively. Unlike plants, Caenorhabditis elegans desaturases seem to use fatty acyl-CoAs as substrates. Plays a role in synaptic vesicle recycling by regulating synaptojanin unc-26 localization at synapses. The sequence is that of Delta(6)-fatty-acid desaturase fat-3 (fat-3) from Caenorhabditis elegans.